The sequence spans 238 residues: Ion-translocating oxidoreductase complex subunit E (238 aa).

5 consecutive transmembrane segments (helical) span residues 41–61 (LGLGLATMLVLACSNAAVSLV), 71–91 (LPAFVMIIAVLTTCIELLMQA), 95–115 (ELYQVLGIFIPLITTNCVILG), 130–150 (SFDGLLMGLGFALVLLVLGGL), and 184–204 (GFLLAILPPGAFIMLGLLIAL).

Belongs to the NqrDE/RnfAE family. As to quaternary structure, the complex is composed of six subunits: RnfA, RnfB, RnfC, RnfD, RnfE and RnfG.

The protein resides in the cell inner membrane. Part of a membrane-bound complex that couples electron transfer with translocation of ions across the membrane. The protein is Ion-translocating oxidoreductase complex subunit E of Pseudomonas aeruginosa (strain LESB58).